The chain runs to 85 residues: Beta-insect depressant toxin Lqh-dprIT3f (85 aa).

The first 21 residues, M1–A21, serve as a signal peptide directing secretion. Residues D22–G82 enclose the LCN-type CS-alpha/beta domain. Disulfide bonds link C31-C81, C35-C56, C42-C63, and C46-C65. G82 carries the post-translational modification Glycine amide.

Belongs to the long (4 C-C) scorpion toxin superfamily. Sodium channel inhibitor family. Beta subfamily. As to expression, expressed by the venom gland.

The protein resides in the secreted. Its function is as follows. Depressant insect beta-toxins cause a transient contraction paralysis followed by a slow flaccid paralysis. They bind voltage-independently at site-4 of sodium channels (Nav) and block action potentials, primarily by depolarizing the axonal membrane and suppressing the sodium current. This depressant toxin is active only on insects. It is found in a relatively small amount in the venom. This Leiurus hebraeus (Hebrew deathstalker scorpion) protein is Beta-insect depressant toxin Lqh-dprIT3f.